We begin with the raw amino-acid sequence, 482 residues long: Zinc finger CCCH domain-containing protein 40 (482 aa).

The segment at 157–184 (RNRAHVCSFYVRGECTRGAECPYRHEMP) adopts a C3H1-type zinc-finger fold. In terms of domain architecture, RRM spans 228–301 (RTLYIGGLNN…IRLKLMWGKP (74 aa)). Composition is skewed to low complexity over residues 329-347 (SQQQ…GQQQ) and 389-428 (PGPQ…YGGY). The interval 329-482 (SQQQSGDQPQ…VPPPQQTTQN (154 aa)) is disordered. The segment covering 429–446 (MPPPRMPYPPPPQYPPYQ) has biased composition (pro residues). A compositionally biased stretch (low complexity) spans 452–466 (PAQSQASSSQQPAPA). The segment covering 473 to 482 (VPPPQQTTQN) has biased composition (pro residues).

The polypeptide is Zinc finger CCCH domain-containing protein 40 (Oryza sativa subsp. japonica (Rice)).